Here is a 224-residue protein sequence, read N- to C-terminus: Orotate phosphoribosyltransferase (224 aa).

Lys-29 contributes to the 5-phospho-alpha-D-ribose 1-diphosphate binding site. 37 to 38 (FF) lines the orotate pocket. 5-phospho-alpha-D-ribose 1-diphosphate contacts are provided by residues 75–76 (YK), Arg-105, Lys-106, Lys-109, His-111, and 130–138 (DDVITAGTS). Thr-134 and Arg-162 together coordinate orotate.

This sequence belongs to the purine/pyrimidine phosphoribosyltransferase family. PyrE subfamily. Homodimer. Requires Mg(2+) as cofactor.

The enzyme catalyses orotidine 5'-phosphate + diphosphate = orotate + 5-phospho-alpha-D-ribose 1-diphosphate. Its pathway is pyrimidine metabolism; UMP biosynthesis via de novo pathway; UMP from orotate: step 1/2. Catalyzes the transfer of a ribosyl phosphate group from 5-phosphoribose 1-diphosphate to orotate, leading to the formation of orotidine monophosphate (OMP). In Bordetella bronchiseptica (strain ATCC BAA-588 / NCTC 13252 / RB50) (Alcaligenes bronchisepticus), this protein is Orotate phosphoribosyltransferase.